We begin with the raw amino-acid sequence, 112 residues long: Probable insulin-like peptide beta-type 5 (112 aa).

An N-terminal signal peptide occupies residues M1–S19. Positions F20 to R58 are cleaved as a propeptide — removed; by convertase egl-3. Intrachain disulfides connect C68/C97, C80/C110, C84/C111, and C96/C101.

Belongs to the insulin family. In terms of processing, may be processed by serine endoprotease bli-4. Expressed by ASI and ASJ sensory neurons.

Its subcellular location is the secreted. Probable insulin-like peptide which negatively regulates synapse development at the neuromuscular junctions. Probably acts as a daf-2/InsR agonist ligand to prevent dauer formation under optimal environmental conditions. Acts on AWC sensory neurons to regulate high salt chemotaxis responses. This is Probable insulin-like peptide beta-type 5 (ins-6) from Caenorhabditis elegans.